Consider the following 576-residue polypeptide: Urease subunit alpha (576 aa).

The 445-residue stretch at 132–576 folds into the Urease domain; the sequence is GGIDTHIHFI…LPMAQRYFLF (445 aa). H137, H139, and K220 together coordinate Ni(2+). K220 bears the N6-carboxylysine mark. H222 is a binding site for substrate. Ni(2+)-binding residues include H249 and H275. The active-site Proton donor is H323. D363 contacts Ni(2+).

The protein belongs to the metallo-dependent hydrolases superfamily. Urease alpha subunit family. In terms of assembly, heterotrimer of UreA (gamma), UreB (beta) and UreC (alpha) subunits. Three heterotrimers associate to form the active enzyme. The cofactor is Ni cation. In terms of processing, carboxylation allows a single lysine to coordinate two nickel ions.

The protein resides in the cytoplasm. It carries out the reaction urea + 2 H2O + H(+) = hydrogencarbonate + 2 NH4(+). The protein operates within nitrogen metabolism; urea degradation; CO(2) and NH(3) from urea (urease route): step 1/1. The chain is Urease subunit alpha from Paenarthrobacter aurescens (strain TC1).